The sequence spans 89 residues: Protein S100-A8 (89 aa).

2 consecutive EF-hand domains span residues 12–47 (LIDV…KFMK) and 46–81 (MKKK…VGLE). Residues His17 and His27 each contribute to the Zn(2+) site. Asp33 lines the Ca(2+) pocket. Cys42 carries the post-translational modification S-nitrosocysteine. Residues Asp59, Asn61, Asp63, and Glu70 each coordinate Ca(2+). A Zn(2+)-binding site is contributed by His83.

Belongs to the S-100 family. In terms of assembly, homodimer. Preferentially exists as a heterodimer or heterotetramer with S100A9 known as calprotectin (S100A8/A9). S100A8 interacts with AGER, ATP2A2 and with the heterodimeric complex formed by TLR4 and LY96. Calprotectin (S100A8/9) interacts with CEACAM3 and tubulin filaments in a calcium-dependent manner. Heterotetrameric calprotectin (S100A8/A9) interacts with ANXA6 and associates with tubulin filaments in activated monocytes. S100A8 and calprotectin (S100A8/9) interact with NCF2/P67PHOX, RAC1 and RAC2. Calprotectin (S100A8/9) interacts with CYBA and CYBB. Calprotectin (S100A8/9) interacts with NOS2 to form the iNOS-S100A8/A9 transnitrosylase complex. Calprotectin (S100A8/9) interacts with CD69. In terms of tissue distribution, found essentially in phagocytic cells.

It is found in the secreted. Its subcellular location is the cytoplasm. The protein localises to the cytoskeleton. It localises to the cell membrane. In terms of biological role, S100A8 is a calcium- and zinc-binding protein which plays a prominent role in the regulation of inflammatory processes and immune response. It can induce neutrophil chemotaxis and adhesion. Predominantly found as calprotectin (S100A8/A9) which has a wide plethora of intra- and extracellular functions. The intracellular functions include: facilitating leukocyte arachidonic acid trafficking and metabolism, modulation of the tubulin-dependent cytoskeleton during migration of phagocytes and activation of the neutrophilic NADPH-oxidase. Also participates in regulatory T-cell differentiation together with CD69. Activates NADPH-oxidase by facilitating the enzyme complex assembly at the cell membrane, transferring arachidonic acid, an essential cofactor, to the enzyme complex and S100A8 contributes to the enzyme assembly by directly binding to NCF2/P67PHOX. The extracellular functions involve pro-inflammatory, antimicrobial, oxidant-scavenging and apoptosis-inducing activities. Its pro-inflammatory activity includes recruitment of leukocytes, promotion of cytokine and chemokine production, and regulation of leukocyte adhesion and migration. Acts as an alarmin or a danger associated molecular pattern (DAMP) molecule and stimulates innate immune cells via binding to pattern recognition receptors such as Toll-like receptor 4 (TLR4) and receptor for advanced glycation endproducts (AGER). Binding to TLR4 and AGER activates the MAP-kinase and NF-kappa-B signaling pathways resulting in the amplification of the pro-inflammatory cascade. Has antimicrobial activity towards bacteria and fungi and exerts its antimicrobial activity probably via chelation of Zn(2+) which is essential for microbial growth. Can induce cell death via autophagy and apoptosis and this occurs through the cross-talk of mitochondria and lysosomes via reactive oxygen species (ROS) and the process involves BNIP3. Can regulate neutrophil number and apoptosis by an anti-apoptotic effect; regulates cell survival via ITGAM/ITGB and TLR4 and a signaling mechanism involving MEK-ERK. Its role as an oxidant scavenger has a protective role in preventing exaggerated tissue damage by scavenging oxidants. The iNOS-S100A8/A9 transnitrosylase complex is proposed to direct selective inflammatory stimulus-dependent S-nitrosylation of multiple targets such as GAPDH, ANXA5, EZR, MSN and VIM by recognizing a [IL]-x-C-x-x-[DE] motif; S100A8 seems to contribute to S-nitrosylation site selectivity. The protein is Protein S100-A8 (S100A8) of Bos taurus (Bovine).